A 260-amino-acid polypeptide reads, in one-letter code: MPVDLLADLTAGALEDAARRRADRPLSAVEAVAAAQAPPLPALDALAPADRVKVIAEVKRASPSRGDLAEIPDPAALARLYETGGASAISVLTEERRFRGSLADLESVRAAVSLPVLRKEFIADPYQVFEARAAGADLVLLIVAALEQRRLAELHDLIVELGMTPLVEAHTADELSRAFDTGAKLVGVNARDLSTFELDRNLFGRLAERYPSDVIRVAESAVKSAADVAHYRAAGAHVVLVGEALVTSDPVATLSEFRGV.

This sequence belongs to the TrpC family.

The enzyme catalyses 1-(2-carboxyphenylamino)-1-deoxy-D-ribulose 5-phosphate + H(+) = (1S,2R)-1-C-(indol-3-yl)glycerol 3-phosphate + CO2 + H2O. The protein operates within amino-acid biosynthesis; L-tryptophan biosynthesis; L-tryptophan from chorismate: step 4/5. This is Indole-3-glycerol phosphate synthase from Leifsonia xyli subsp. xyli (strain CTCB07).